We begin with the raw amino-acid sequence, 636 residues long: Chaperone protein DnaK (636 aa).

Thr198 carries the post-translational modification Phosphothreonine; by autocatalysis. Residues 598 to 636 (YAAKEQPGEHGETGSGEQARKESGKDENVVDADFEEVKK) form a disordered region. Residues 603–625 (QPGEHGETGSGEQARKESGKDEN) show a composition bias toward basic and acidic residues. Positions 626–636 (VVDADFEEVKK) are enriched in acidic residues.

The protein belongs to the heat shock protein 70 family.

Functionally, acts as a chaperone. In Pelobacter propionicus (strain DSM 2379 / NBRC 103807 / OttBd1), this protein is Chaperone protein DnaK.